A 525-amino-acid polypeptide reads, in one-letter code: Protein MGF 505-6R (525 aa).

4 ANK repeats span residues 54–83 (SIND…NLHY), 129–158 (ACDF…LLNV), 261–291 (NIHR…APNT), and 324–351 (KKLV…NLVD).

The protein belongs to the asfivirus MGF 505 family.

In terms of biological role, plays a role in virus cell tropism, and may be required for efficient virus replication in macrophages. This chain is Protein MGF 505-6R, found in Ornithodoros (relapsing fever ticks).